We begin with the raw amino-acid sequence, 650 residues long: 1-deoxy-D-xylulose-5-phosphate synthase 2 (650 aa).

Thiamine diphosphate is bound by residues H79 and 120–122; that span reads AHS. A Mg(2+)-binding site is contributed by D151. Thiamine diphosphate contacts are provided by residues 152 to 153, N180, Y289, and E371; that span reads GS. Residue N180 coordinates Mg(2+).

It belongs to the transketolase family. DXPS subfamily. In terms of assembly, homodimer. Mg(2+) serves as cofactor. It depends on thiamine diphosphate as a cofactor.

It carries out the reaction D-glyceraldehyde 3-phosphate + pyruvate + H(+) = 1-deoxy-D-xylulose 5-phosphate + CO2. The protein operates within metabolic intermediate biosynthesis; 1-deoxy-D-xylulose 5-phosphate biosynthesis; 1-deoxy-D-xylulose 5-phosphate from D-glyceraldehyde 3-phosphate and pyruvate: step 1/1. In terms of biological role, catalyzes the acyloin condensation reaction between C atoms 2 and 3 of pyruvate and glyceraldehyde 3-phosphate to yield 1-deoxy-D-xylulose-5-phosphate (DXP). The protein is 1-deoxy-D-xylulose-5-phosphate synthase 2 of Zymomonas mobilis subsp. mobilis (strain ATCC 31821 / ZM4 / CP4).